The primary structure comprises 684 residues: MVIKYLLLILVQSFVAFALPFTSRSDPKAEYLVTSLPGLYSNIRTDERPLMFAGQLELYPENQTHYFFWKYQDTNQIPEAKKRTIFWLNGGPGCSSMDGALMEAGPFRINKEGEVIYNEGSWHKSGDMVFVDQPAGTGFSYSDDYDHDLDQITVEFVRFMEKFFELFPEDASNEIYFAGESYAGQYIPYIADGILRRNKNLREGEKPFNLKGLMIGNGWIAPNEQSLSYLPYSVQAGIIKTNNPRWSSILRQHQECQDIVSENDGPDGSDVSQVVSNTCERVLNLILEATRDQSAADNEQCVNMYDHTLRDSYPSCGMNWPPDLANVTPFLREQSVMNDLNLINHKKWSECSGKVGNSFRAKNSKPAIHLFPSILEEIPIMLFNGNRDIICNYIGIEGFIKKLTWNGQTGFSEDLDTLDWVYDNKTAGYIQSERNLTVVNVFDASHMVPFDKPEISRSLIDIITGNFDEKEVDNKSDMKKKSIVTYPLGVRMAKQKEESESKTSPTSVTQSKTSSISAVSGKSLATSTTLDQEHSATPSAEAERAKNQQTSNRITRLIQLLVIVVLIWGVYILYSSYRSRPSSIIKTGPSGKKKNVQWADQLRQFEEEEIEQNEQGILSRALNKLKGGDSRGTYAPTSGKTYEDIEMNEGITEHTDNRVDDFIIESDEEDAHDENQTNKQSVSK.

Positions 1 to 18 (MVIKYLLLILVQSFVAFA) are cleaved as a signal peptide. Topologically, residues 19-556 (LPFTSRSDPK…NQQTSNRITR (538 aa)) are lumenal. N-linked (GlcNAc...) asparagine glycosylation occurs at Asn-62. Residues Ser-181 and Asp-388 contribute to the active site. Asn-424 and Asn-435 each carry an N-linked (GlcNAc...) asparagine glycan. His-446 is a catalytic residue. The N-linked (GlcNAc...) asparagine glycan is linked to Asn-474. Positions 494 to 549 (KQKEESESKTSPTSVTQSKTSSISAVSGKSLATSTTLDQEHSATPSAEAERAKNQQ) are disordered. Residues 510-538 (QSKTSSISAVSGKSLATSTTLDQEHSATP) show a composition bias toward polar residues. The chain crosses the membrane as a helical span at residues 557 to 577 (LIQLLVIVVLIWGVYILYSSY). Topologically, residues 578–684 (RSRPSSIIKT…NQTNKQSVSK (107 aa)) are cytoplasmic. A disordered region spans residues 647 to 684 (MNEGITEHTDNRVDDFIIESDEEDAHDENQTNKQSVSK). The segment covering 651–661 (ITEHTDNRVDD) has biased composition (basic and acidic residues). Residues 662 to 672 (FIIESDEEDAH) show a composition bias toward acidic residues.

This sequence belongs to the peptidase S10 family.

It is found in the golgi apparatus. It localises to the trans-Golgi network membrane. It carries out the reaction Preferential release of a C-terminal arginine or lysine residue.. Functionally, protease with a carboxypeptidase B-like function involved in the C-terminal processing of the lysine and arginine residues from protein precursors. Promotes cell fusion and is involved in the programmed cell death. This Debaryomyces hansenii (strain ATCC 36239 / CBS 767 / BCRC 21394 / JCM 1990 / NBRC 0083 / IGC 2968) (Yeast) protein is Pheromone-processing carboxypeptidase KEX1 (KEX1).